Consider the following 352-residue polypeptide: Photosystem II D2 protein (352 aa).

The helical transmembrane segment at Cys-40–Thr-60 threads the bilayer. Residue His-117 coordinates chlorophyll a. Residues Gly-124 to Pro-140 traverse the membrane as a helical segment. Pheophytin a contacts are provided by Gln-129 and Asn-142. Residues Val-152–Ser-165 traverse the membrane as a helical segment. His-197 provides a ligand contact to chlorophyll a. The helical transmembrane segment at Gly-207–Glu-227 threads the bilayer. A plastoquinone contacts are provided by His-214 and Phe-261. His-214 provides a ligand contact to Fe cation. His-268 lines the Fe cation pocket. The chain crosses the membrane as a helical span at residues Gly-278–Arg-294.

Belongs to the reaction center PufL/M/PsbA/D family. In terms of assembly, PSII is composed of 1 copy each of membrane proteins PsbA, PsbB, PsbC, PsbD, PsbE, PsbF, PsbH, PsbI, PsbJ, PsbK, PsbL, PsbM, PsbT, PsbX, PsbY, PsbZ, Psb30/Ycf12, peripheral proteins PsbO, CyanoQ (PsbQ), PsbU, PsbV and a large number of cofactors. It forms dimeric complexes. It depends on The D1/D2 heterodimer binds P680, chlorophylls that are the primary electron donor of PSII, and subsequent electron acceptors. It shares a non-heme iron and each subunit binds pheophytin, quinone, additional chlorophylls, carotenoids and lipids. There is also a Cl(-1) ion associated with D1 and D2, which is required for oxygen evolution. The PSII complex binds additional chlorophylls, carotenoids and specific lipids. as a cofactor.

The protein localises to the cellular thylakoid membrane. The catalysed reaction is 2 a plastoquinone + 4 hnu + 2 H2O = 2 a plastoquinol + O2. Functionally, photosystem II (PSII) is a light-driven water:plastoquinone oxidoreductase that uses light energy to abstract electrons from H(2)O, generating O(2) and a proton gradient subsequently used for ATP formation. It consists of a core antenna complex that captures photons, and an electron transfer chain that converts photonic excitation into a charge separation. The D1/D2 (PsbA/PsbD) reaction center heterodimer binds P680, the primary electron donor of PSII as well as several subsequent electron acceptors. D2 is needed for assembly of a stable PSII complex. The chain is Photosystem II D2 protein from Synechococcus sp. (strain JA-2-3B'a(2-13)) (Cyanobacteria bacterium Yellowstone B-Prime).